Consider the following 337-residue polypeptide: Probable dual-specificity RNA methyltransferase RlmN (337 aa).

E88 acts as the Proton acceptor in catalysis. Residues 94-322 (SSDRLTVCVS…ASIRRSRGLD (229 aa)) form the Radical SAM core domain. Cysteines 101 and 327 form a disulfide. 3 residues coordinate [4Fe-4S] cluster: C108, C112, and C115. Residues 155 to 156 (GE), S185, 208 to 210 (SLH), and N284 each bind S-adenosyl-L-methionine. The active-site S-methylcysteine intermediate is the C327.

The protein belongs to the radical SAM superfamily. RlmN family. [4Fe-4S] cluster is required as a cofactor.

Its subcellular location is the cytoplasm. The enzyme catalyses adenosine(2503) in 23S rRNA + 2 reduced [2Fe-2S]-[ferredoxin] + 2 S-adenosyl-L-methionine = 2-methyladenosine(2503) in 23S rRNA + 5'-deoxyadenosine + L-methionine + 2 oxidized [2Fe-2S]-[ferredoxin] + S-adenosyl-L-homocysteine. The catalysed reaction is adenosine(37) in tRNA + 2 reduced [2Fe-2S]-[ferredoxin] + 2 S-adenosyl-L-methionine = 2-methyladenosine(37) in tRNA + 5'-deoxyadenosine + L-methionine + 2 oxidized [2Fe-2S]-[ferredoxin] + S-adenosyl-L-homocysteine. Specifically methylates position 2 of adenine 2503 in 23S rRNA and position 2 of adenine 37 in tRNAs. The sequence is that of Probable dual-specificity RNA methyltransferase RlmN from Thermosynechococcus vestitus (strain NIES-2133 / IAM M-273 / BP-1).